Here is a 190-residue protein sequence, read N- to C-terminus: Peptidyl-prolyl cis-trans isomerase A (190 aa).

Positions 1 to 24 are cleaved as a signal peptide; it reads MLKSTLAAVAAVFALSALSPAALA. Positions 27-188 constitute a PPIase cyclophilin-type domain; sequence GDPHVLLTTS…KPVVILSAKV (162 aa).

Belongs to the cyclophilin-type PPIase family.

It is found in the periplasm. It carries out the reaction [protein]-peptidylproline (omega=180) = [protein]-peptidylproline (omega=0). Functionally, PPIases accelerate the folding of proteins. It catalyzes the cis-trans isomerization of proline imidic peptide bonds in oligopeptides. The polypeptide is Peptidyl-prolyl cis-trans isomerase A (ppiA) (Salmonella typhimurium (strain LT2 / SGSC1412 / ATCC 700720)).